A 123-amino-acid polypeptide reads, in one-letter code: Small ribosomal subunit protein uS12 (123 aa).

D89 bears the 3-methylthioaspartic acid mark. Positions 101–123 are disordered; it reads SLDTSGVKDRKQGRSKYGAKRPK. The segment covering 113–123 has biased composition (basic residues); it reads GRSKYGAKRPK.

The protein belongs to the universal ribosomal protein uS12 family. As to quaternary structure, part of the 30S ribosomal subunit. Contacts proteins S8 and S17. May interact with IF1 in the 30S initiation complex.

In terms of biological role, with S4 and S5 plays an important role in translational accuracy. Interacts with and stabilizes bases of the 16S rRNA that are involved in tRNA selection in the A site and with the mRNA backbone. Located at the interface of the 30S and 50S subunits, it traverses the body of the 30S subunit contacting proteins on the other side and probably holding the rRNA structure together. The combined cluster of proteins S8, S12 and S17 appears to hold together the shoulder and platform of the 30S subunit. The protein is Small ribosomal subunit protein uS12 of Stutzerimonas stutzeri (strain A1501) (Pseudomonas stutzeri).